Here is a 370-residue protein sequence, read N- to C-terminus: Serine O-succinyltransferase (370 aa).

The region spanning 46–355 (AILIVTGLSP…PQGHDAFLVD (310 aa)) is the AB hydrolase-1 domain. Residues 52 to 55 (GLSP) form an important for substrate specificity region. Serine 149 serves as the catalytic Nucleophile. Arginine 218 contributes to the substrate binding site. Active-site residues include aspartate 316 and histidine 349. Aspartate 350 serves as a coordination point for substrate.

It belongs to the AB hydrolase superfamily. MetX family. As to quaternary structure, homodimer.

The protein resides in the cytoplasm. It carries out the reaction succinyl-CoA + L-serine = O-succinyl-L-serine + CoA. It catalyses the reaction L-homoserine + succinyl-CoA = O-succinyl-L-homoserine + CoA. Its pathway is amino-acid biosynthesis; L-cysteine biosynthesis; L-cysteine from L-serine: step 1/2. In terms of biological role, transfers a succinyl group from succinyl-CoA to L-serine, forming succinyl-L-serine. In vitro, also has homoserine succinyl transferase activity. This chain is Serine O-succinyltransferase, found in Stenotrophomonas maltophilia (Pseudomonas maltophilia).